The sequence spans 234 residues: tRNA (guanine-N(1)-)-methyltransferase (234 aa).

Residues G115 and 135-140 (VGDYIL) each bind S-adenosyl-L-methionine.

It belongs to the RNA methyltransferase TrmD family. As to quaternary structure, homodimer.

The protein localises to the cytoplasm. It carries out the reaction guanosine(37) in tRNA + S-adenosyl-L-methionine = N(1)-methylguanosine(37) in tRNA + S-adenosyl-L-homocysteine + H(+). Specifically methylates guanosine-37 in various tRNAs. The sequence is that of tRNA (guanine-N(1)-)-methyltransferase from Rickettsia africae (strain ESF-5).